Consider the following 242-residue polypeptide: uncharacterized protein (242 aa).

Residues G198, I218, and L227 each contribute to the S-adenosyl-L-methionine site.

This sequence belongs to the class IV-like SAM-binding methyltransferase superfamily. RNA methyltransferase TrmH family.

This is an uncharacterized protein from Mycoplasma genitalium (strain ATCC 33530 / DSM 19775 / NCTC 10195 / G37) (Mycoplasmoides genitalium).